The chain runs to 520 residues: D-aminopeptidase (520 aa).

The active-site Nucleophile is the Ser62. Lys65 serves as the catalytic Proton donor/acceptor. An important for specificity region spans residues 477–487 (QRSMDAPSPGE). Asp481 is a binding site for substrate.

Belongs to the peptidase S12 family. In terms of assembly, homodimer.

The catalysed reaction is Release of an N-terminal D-amino acid from a peptide, Xaa-|-Yaa-, in which Xaa is preferably D-Ala, D-Ser or D-Thr. D-amino acid amides and methyl esters also are hydrolyzed, as is glycine amide.. Inhibited by beta-lactam compounds such as 6-aminopenicillic acid, 7-aminocephalosporanic acid, benzylpenicillin and ampicillin. Inhibited by p-chloromercuribenzoate. In terms of biological role, hydrolyzes N-terminal residues in D-amino acid-containing peptides. The polypeptide is D-aminopeptidase (dap) (Brucella anthropi (Ochrobactrum anthropi)).